We begin with the raw amino-acid sequence, 301 residues long: MSEPFKSGFVAIVGRPNVGKSTLLNHIIGQKIAIMSDKAQTTRNKVQGVYTTDESQIIFIDTPGIHKPKHKLGDFMVKIALNTFQEVDLIYFVIDASTGFGRGDEFIIEKLKNVQTPVFLLINKIDLIAPEDLFKLIEQYRDLMEFDEIIPISALQGNNVPNLLEQTNANLEIGPMYYPKDQITDHPERFIISELIREQVLQLTREEVPHSVAVVIEGIEKNPKTEKLTINATIIVERSTQKGIIIGKQGQMLKQIGMRARKEIERLLGSKVFLEVWVKVQKNWRDKEHYLQDYGFDREEY.

Positions 6 to 173 (KSGFVAIVGR…LEQTNANLEI (168 aa)) constitute an Era-type G domain. The interval 14 to 21 (GRPNVGKS) is G1. GTP is bound at residue 14-21 (GRPNVGKS). The interval 40–44 (QTTRN) is G2. The tract at residues 61-64 (DTPG) is G3. GTP contacts are provided by residues 61–65 (DTPGI) and 123–126 (NKID). The interval 123–126 (NKID) is G4. The interval 152–154 (ISA) is G5. Residues 204-282 (TREEVPHSVA…FLEVWVKVQK (79 aa)) form the KH type-2 domain.

This sequence belongs to the TRAFAC class TrmE-Era-EngA-EngB-Septin-like GTPase superfamily. Era GTPase family. Monomer.

The protein resides in the cytoplasm. It localises to the cell membrane. Functionally, an essential GTPase that binds both GDP and GTP, with rapid nucleotide exchange. Plays a role in 16S rRNA processing and 30S ribosomal subunit biogenesis and possibly also in cell cycle regulation and energy metabolism. The protein is GTPase Era of Listeria monocytogenes serotype 4a (strain HCC23).